A 364-amino-acid chain; its full sequence is MSTPSSLQALTKKVLATQHISKEYSQSREYCHILKCCGLWWHGGPIMLSTNEDNQMMIKSASFKDGLELNVALMKAVQENNRGLIELFIEWGADINFGLITVNTENIRSLCRELGAKESLNKWEVLDVFYTVKRFKSSNNIILCHELLSNNPLFLSEDNVQLRRIINYNLRRISINFILDEISFNEKLTRFWYSQAVLYNLTEAIQYFYQKYKHFKDWRLICGLAYNNVFDLHELYNKEKVGMDINQMMELACIYRYNYSTIYYCFMMGADINQAMITSVIKSYICNLFFCIDLGATAFEECLEIAKQQNDIESIKILIYKNYYSPDSSLISLKITDPEKINILLDDETYESKNELIYEESHRY.

It belongs to the asfivirus MGF 360 family.

In terms of biological role, plays a role in virus cell tropism, and may be required for efficient virus replication in macrophages. This is Protein MGF 360-1L from Ornithodoros (relapsing fever ticks).